A 725-amino-acid polypeptide reads, in one-letter code: ATP-dependent rRNA helicase SPB4 (725 aa).

The Q motif motif lies at 15–43 (WAKLNPPLSPWILDVINSMGFKNMTPVQA). Residues 46 to 260 (IPRAVKNQDC…GLGLRNPVRI (215 aa)) form the Helicase ATP-binding domain. 59–66 (AVTGSGKT) lines the ATP pocket. The interval 119–156 (ESEEETGDVEAHAPPFASSSRSPSPQTPDKPLFPLPML) is disordered. Over residues 132-142 (PPFASSSRSPS) the composition is skewed to low complexity. Positions 143-152 (PQTPDKPLFP) are enriched in pro residues. The DEAD box motif lies at 207-210 (DEAD). Residues 295–458 (KTLQLIRLLL…YINAYLEEVD (164 aa)) form the Helicase C-terminal domain. A disordered region spans residues 591–725 (AQRADNQSSN…IGGGMFDDLE (135 aa)). Basic and acidic residues-rich tracts occupy residues 603 to 646 (ARAE…KYEW) and 685 to 707 (EIGK…KESS). The segment covering 709–725 (GGAGGGGIGGGMFDDLE) has biased composition (gly residues).

It belongs to the DEAD box helicase family. DDX55/SPB4 subfamily. Component of pre-60S ribosomal complexes.

The protein resides in the nucleus. Its subcellular location is the nucleolus. It catalyses the reaction ATP + H2O = ADP + phosphate + H(+). In terms of biological role, ATP-binding RNA helicase involved in the biogenesis of 60S ribosomal subunits. Binds 90S pre-ribosomal particles and dissociates from pre-60S ribosomal particles after processing of 27SB pre-rRNA. Required for the normal formation of 18S rRNA through the processing of pre-rRNAs at sites A0, A1 and A2, and the normal formation of 25S and 5.8S rRNAs through the processing of pre-rRNAs at sites C1 and C2. This Cryptococcus neoformans var. neoformans serotype D (strain JEC21 / ATCC MYA-565) (Filobasidiella neoformans) protein is ATP-dependent rRNA helicase SPB4.